A 1486-amino-acid chain; its full sequence is MFSFVDSRTLVLFAATQVILLAVVRCQDEEDVLDTGSCVQHGQRYSDKDVWKPEPCQICVCDTGTVLCDDIICEESKDCPNAEIPFGECCPICPTEQSSTSSGQGVLKGQKGEPGDIKDVLGPRGPPGPQGPSGEQGSRGERGDKGEKGAPGPRGRDGEPGTPGNPGPVGPPGPPGLGGNFAAQMTGGFDEKAGGAQMGVMQGPMGPMGPRGPPGPTGAPGPQGFQGNPGEPGEPGAGGPMGPRGPPGPSGKPGDDGEAGKPGKSGERGPPGPQGARGFPGTPGLPGVKGHRGYPGLDGAKGEAGAAGAKGEGGATGEAGSPGPMGPRGLPGERGRPGSSGAAGARGNDGLPGPAGPPGPVGPAGAPGFPGAPGSKGEAGPTGARGPEGAQGPRGESGTPGSPGPAGASGNPGTDGIPGAKGSSGGPGIAGAPGFPGPRGPPGPQGATGPLGPKGQTGDPGVAGFKGEQGPKGEIGSAGPQGAPGPAGEEGKRGARGEPGAAGPNGPPGERGAPGNRGFPGQDGLAGPKGAPGERGVPGLGGPKGGNGDPGRPGEPGLPGARGLTGRPGDAGPQGKVGPSGASGEDGRPGPPGPQGARGQPGVMGFPGPKGANGEPGKAGEKGLVGAPGLRGLPGKDGETGSQGPNGPAGPAGERGEQGPPGPSGFQGLPGPPGSPGEGGKPGDQGVPGEAGAPGLVGPRGERGFPGERGSSGPQGLQGPRGLPGTPGTDGPKGASGPSGPNGAQGPPGLQGMPGERGAAGISGPKGDRGDTGEKGPEGASGKDGSRGLTGPIGPPGPAGPNGEKGESGPSGPPGIVGARGAPGDRGENGPPGPAGFAGPPGADGQSGLKGDQGESGQKGDAGAPGPQGPSGAPGPQGPTGVFGPKGARGAQGPAGATGFPGAAGRVGTPGPNGNPGPPGPPGSAGKEGPKGVRGDAGPPGRAGDPGLQGAAGAPGEKGEPGEDGPSGPDGPPGPQGLSGQRGIVGLPGQRGERGFPGLPGPSGEPGKQGGPGSSGDRGPPGPVGPPGLTGPSGEPGREGNPGSDGPPGRDGATGIKGDRGETGPLGAPGAPGAPGAPGSVGPTGKQGDRGESGPQGPLGPSGPAGARGLAGPQGPRGDKGEAGEAGERGQKGHRGFTGLQGLPGPPGSAGDQGATGPAGPAGPRGPPGPVGPSGKDGSNGISGPIGPPGPRGRSGETGPSGPPGQPGPPGPPGPPGPGIDMSAFAGLSQPEKGPDPMRYMRADQASNSLPVDVEATLKSLNNQIENIRSPDGTKKNPARTCRDLKLCHPEWKSGDYWIDPNQGCTVDAIKVFCDMETGETCVYPNPSKIPKKNWWSAKGKEKKHIWFGETINGGFQFSYGDDSSAPNTANIQMTFLRLLSTDASQNITYHCKNSIAFMDEASGNLKKAVLLQGSNDVEIRAEGNSRFTYNALEDGCKKHTGKWSKTVIEYRTQKTSRLPIVDIAPMDIGGADQEFGVDIGPVCFL.

Residues 1–26 (MFSFVDSRTLVLFAATQVILLAVVRC) form the signal peptide. Positions 27-183 (QDEEDVLDTG…PPGLGGNFAA (157 aa)) are cleaved as a propeptide — N-terminal propeptide. The VWFC domain maps to 36 to 94 (GSCVQHGQRYSDKDVWKPEPCQICVCDTGTVLCDDIICEESKDCPNAEIPFGECCPICP). A disordered region spans residues 100–1241 (TSSGQGVLKG…EKGPDPMRYM (1142 aa)). Basic and acidic residues-rich tracts occupy residues 110–121 (QKGEPGDIKDVL) and 138–159 (SRGE…RDGE). Over residues 163 to 175 (PGNPGPVGPPGPP) the composition is skewed to pro residues. The span at 194–205 (GGAQMGVMQGPM) shows a compositional bias: low complexity. The triple-helical region stretch occupies residues 203–1216 (GPMGPMGPRG…PGPPGPPGPP (1014 aa)). Positions 210–219 (PRGPPGPTGA) are enriched in pro residues. Over residues 220–231 (PGPQGFQGNPGE) the composition is skewed to low complexity. Positions 233–242 (GEPGAGGPMG) are enriched in gly residues. Residues 253 to 267 (PGDDGEAGKPGKSGE) are compositionally biased toward basic and acidic residues. Residues 308 to 317 (GAKGEGGATG) are compositionally biased toward gly residues. 4 stretches are compositionally biased toward low complexity: residues 318 to 330 (EAGS…PRGL), 337 to 346 (PGSSGAAGAR), 363 to 373 (PAGAPGFPGAP), and 393 to 421 (PRGE…PGAK). Gly residues predominate over residues 422-431 (GSSGGPGIAG). The segment covering 435 to 444 (FPGPRGPPGP) has biased composition (pro residues). Low complexity-rich tracts occupy residues 478–487 (AGPQGAPGPA) and 498–517 (EPGA…PGNR). A compositionally biased stretch (gly residues) spans 536 to 551 (GVPGLGGPKGGNGDPG). Proline 661 and proline 670 each carry 4-hydroxyproline. Position 672 is a 3-hydroxyproline (proline 672). A 4-hydroxyproline mark is found at proline 673 and proline 676. Over residues 708 to 732 (ERGSSGPQGLQGPRGLPGTPGTDGP) the composition is skewed to low complexity. Residues 766–777 (KGDRGDTGEKGP) show a composition bias toward basic and acidic residues. Positions 891–904 (AQGPAGATGFPGAA) are enriched in low complexity. 4-hydroxyproline occurs at positions 910, 916, and 922. A compositionally biased stretch (pro residues) spans 913–922 (NGNPGPPGPP). Residues 936 to 955 (DAGPPGRAGDPGLQGAAGAP) are compositionally biased toward low complexity. Residues 1007–1016 (GKQGGPGSSG) show a composition bias toward gly residues. Residues 1102–1116 (SGPAGARGLAGPQGP) are compositionally biased toward low complexity. Positions 1117 to 1131 (RGDKGEAGEAGERGQ) are enriched in basic and acidic residues. Residue proline 1146 is modified to 3-hydroxyproline. The span at 1150 to 1159 (AGDQGATGPA) shows a compositional bias: low complexity. Residue proline 1188 is modified to 3-hydroxyproline. Proline 1189 is modified (4-hydroxyproline). The span at 1201–1218 (SGPPGQPGPPGPPGPPGP) shows a compositional bias: pro residues. Proline 1203 is subject to 3-hydroxyproline. 2 positions are modified to 4-hydroxyproline: proline 1204 and proline 1207. A 3-hydroxyproline modification is found at proline 1209. A 4-hydroxyproline mark is found at proline 1210 and proline 1213. Proline 1215 is modified (3-hydroxyproline). A 4-hydroxyproline modification is found at proline 1216. Residues 1217 to 1243 (GPGIDMSAFAGLSQPEKGPDPMRYMRA) are nonhelical region (C-terminal). A propeptide spans 1244–1486 (DQASNSLPVD…GVDIGPVCFL (243 aa)) (C-terminal propeptide). Positions 1252 to 1486 (VDVEATLKSL…GVDIGPVCFL (235 aa)) constitute a Fibrillar collagen NC1 domain. Intrachain disulfides connect cysteine 1282–cysteine 1314, cysteine 1322–cysteine 1484, and cysteine 1392–cysteine 1437. Positions 1300, 1302, 1303, 1305, and 1308 each coordinate Ca(2+). A glycan (N-linked (GlcNAc...) asparagine) is linked at asparagine 1387.

Belongs to the fibrillar collagen family. As to quaternary structure, homotrimers of alpha 1(II) chains. In terms of processing, contains mostly 4-hydroxyproline. Prolines at the third position of the tripeptide repeating unit (G-X-P) are 4-hydroxylated in some or all of the chains. Post-translationally, contains 3-hydroxyproline at a few sites. This modification occurs on the first proline residue in the sequence motif Gly-Pro-Hyp, where Hyp is 4-hydroxyproline. Lysine residues at the third position of the tripeptide repeating unit (G-X-Y) are 5-hydroxylated in some or all of the chains. In terms of processing, O-glycosylated on hydroxylated lysine residues. The O-linked glycan consists of a Glc-Gal disaccharide.

The protein resides in the secreted. It localises to the extracellular space. Its subcellular location is the extracellular matrix. Its function is as follows. Type II collagen is specific for cartilaginous tissues. It is essential for the normal embryonic development of the skeleton, for linear growth and for the ability of cartilage to resist compressive forces. The sequence is that of Collagen alpha-1(II) chain from Xenopus laevis (African clawed frog).